The primary structure comprises 669 residues: RNA-binding protein 14 (669 aa).

2 RRM domains span residues Met1–Pro73 and Trp79–Lys149. Residues Lys126, Lys135, Lys138, Lys149, and Lys153 each participate in a glycyl lysine isopeptide (Lys-Gly) (interchain with G-Cter in SUMO2) cross-link. Disordered regions lie at residues Thr148–Phe175 and Asn193–Ala232. At Ser161 the chain carries Phosphoserine. An N6-acetyllysine; alternate modification is found at Lys164. Lys164 is covalently cross-linked (Glycyl lysine isopeptide (Lys-Gly) (interchain with G-Cter in SUMO2); alternate). Thr206 bears the Phosphothreonine mark. A phosphoserine mark is found at Ser220, Ser242, Ser244, Ser256, Ser272, and Ser280. Residues Pro284–Gly303 are disordered. The span at Gly287–Gly303 shows a compositional bias: low complexity. The TRBP-interacting domain; interaction with STIL stretch occupies residues Gly307 to Ser354. A phosphoserine mark is found at Ser520, Ser523, Ser527, and Ser562. The segment at Ala569–Asp590 is disordered. Thr572 carries the phosphothreonine modification. Ser582 carries the phosphoserine modification. Lys600 participates in a covalent cross-link: Glycyl lysine isopeptide (Lys-Gly) (interchain with G-Cter in SUMO2). Phosphoserine occurs at positions 618, 620, 623, 627, 643, and 649.

In terms of assembly, interacts with NCOA6, CITED1 and XRCC5/KU86. Interacts with SS18. Interacts with STIL and interferes with its interaction with CPAP. Interacts with gamma-tubulin. Part of the HDP-RNP complex composed of at least HEXIM1, PRKDC, XRCC5, XRCC6, paraspeckle proteins (SFPQ, NONO, PSPC1, RBM14, and MATR3) and NEAT1 RNA.

Its subcellular location is the nucleus. It localises to the nucleolus. It is found in the cytoplasm. May function as a nuclear receptor coactivator, enhancing transcription through other coactivators such as NCOA6 and CITED1. Regulates centriole biogenesis by suppressing the formation of aberrant centriolar protein complexes in the cytoplasm and thus preserving mitotic spindle integrity. Prevents the formation of the STIL-CPAP complex (which can induce the formation of aberrant centriolar protein complexes) by interfering with the interaction of STIL with CPAP. Plays a role in the regulation of DNA virus-mediated innate immune response by assembling into the HDP-RNP complex, a complex that serves as a platform for IRF3 phosphorylation and subsequent innate immune response activation through the cGAS-STING pathway. The sequence is that of RNA-binding protein 14 (RBM14) from Bos taurus (Bovine).